The primary structure comprises 365 residues: Succinyl-diaminopimelate desuccinylase (365 aa).

A Zn(2+)-binding site is contributed by histidine 64. The active site involves aspartate 66. Residue aspartate 95 participates in Zn(2+) binding. Glutamate 125 acts as the Proton acceptor in catalysis. Zn(2+) contacts are provided by glutamate 126, glutamate 154, and histidine 339.

It belongs to the peptidase M20A family. DapE subfamily. Homodimer. The cofactor is Zn(2+). Requires Co(2+) as cofactor.

The catalysed reaction is N-succinyl-(2S,6S)-2,6-diaminopimelate + H2O = (2S,6S)-2,6-diaminopimelate + succinate. It functions in the pathway amino-acid biosynthesis; L-lysine biosynthesis via DAP pathway; LL-2,6-diaminopimelate from (S)-tetrahydrodipicolinate (succinylase route): step 3/3. In terms of biological role, catalyzes the hydrolysis of N-succinyl-L,L-diaminopimelic acid (SDAP), forming succinate and LL-2,6-diaminopimelate (DAP), an intermediate involved in the bacterial biosynthesis of lysine and meso-diaminopimelic acid, an essential component of bacterial cell walls. This is Succinyl-diaminopimelate desuccinylase from Campylobacter curvus (strain 525.92).